Reading from the N-terminus, the 72-residue chain is UPF0346 protein EF_1680 (72 aa).

This sequence belongs to the UPF0346 family.

The polypeptide is UPF0346 protein EF_1680 (Enterococcus faecalis (strain ATCC 700802 / V583)).